The chain runs to 148 residues: D-aminoacyl-tRNA deacylase (148 aa).

A Gly-cisPro motif, important for rejection of L-amino acids motif is present at residues 136-137 (GP).

It belongs to the DTD family. Homodimer.

Its subcellular location is the cytoplasm. It catalyses the reaction glycyl-tRNA(Ala) + H2O = tRNA(Ala) + glycine + H(+). It carries out the reaction a D-aminoacyl-tRNA + H2O = a tRNA + a D-alpha-amino acid + H(+). In terms of biological role, an aminoacyl-tRNA editing enzyme that deacylates mischarged D-aminoacyl-tRNAs. Also deacylates mischarged glycyl-tRNA(Ala), protecting cells against glycine mischarging by AlaRS. Acts via tRNA-based rather than protein-based catalysis; rejects L-amino acids rather than detecting D-amino acids in the active site. By recycling D-aminoacyl-tRNA to D-amino acids and free tRNA molecules, this enzyme counteracts the toxicity associated with the formation of D-aminoacyl-tRNA entities in vivo and helps enforce protein L-homochirality. This is D-aminoacyl-tRNA deacylase from Streptococcus mutans serotype c (strain ATCC 700610 / UA159).